The chain runs to 640 residues: Epithelial sodium channel subunit beta (640 aa).

At 1-50 the chain is on the cytoplasmic side; the sequence is MHVKKYLLKGLHRLQKGPGYTYKELLVWYCDNTNTHGPKRIICEGPKKKA. The chain crosses the membrane as a helical span at residues 51–71; that stretch reads MWFLLTLLFAALVCWQWGIFI. Over 72 to 532 the chain is Extracellular; it reads RTYLSWEVSV…GGQFGFWMGG (461 aa). 9 disulfides stabilise this stretch: Cys98–Cys272, Cys184–Cys189, Cys196–Cys203, Cys249–Cys256, Cys361–Cys448, Cys386–Cys444, Cys390–Cys440, Cys399–Cys426, and Cys401–Cys415. An N-linked (GlcNAc...) asparagine glycan is attached at Asn260. The chain crosses the membrane as a helical span at residues 533-553; the sequence is SVLCLIEFGEIIIDFVWITII. At 554–640 the chain is on the cytoplasmic side; it reads KLVALAKSLR…IESDSEGDAI (87 aa). The disordered stretch occupies residues 590–640; sequence FQPDTAPRSPNTGPYPSEQALPIPGTPPPNYDSLRLQPLDVIESDSEGDAI. Residues 616-620 carry the PY motif; recruits WW domain-containing proteins and is thereby required for ubiquitination and inhibition of the channel by NEDD4 and NEDD4L motif; it reads PPPNY. Over residues 631–640 the composition is skewed to acidic residues; sequence IESDSEGDAI. Phosphoserine is present on residues Ser633 and Ser635.

Belongs to the amiloride-sensitive sodium channel (TC 1.A.6) family. SCNN1B subfamily. In terms of assembly, component of the heterotrimeric epithelial sodium channel (ENaC) composed of an alpha/SCNN1A, a beta/SCNN1B and a gamma/SCNN1G subunit. An additional delta/SCNN1D subunit can replace the alpha/SCNN1A subunit to form an alternative channel with specific properties. Interacts with WWP1 (via WW domains). Interacts with WWP2 (via WW domains); inhibits the channel. Interacts with the full-length immature form of PCSK9 (pro-PCSK9); inhibits ENaC by promoting its proteasomal degradation. Interacts (N-glycosylated) with BPIFA1; the interaction is direct and inhibits the proteolytic processing of SCNN1A and SCNN1G and the activation of ENaC. Ubiquitinated. Can be ubiquitinated at multiple sites and undergo monoubiquitination and polyubiquitination. Ubiquitination by NEDD4 or NEDD4L inhibits the ENaC channel through endocytosis, intracellular retention and degradation of its individual subunits. However, some studies could not confirm the ubiquitination of this subunit of the ENaC. Post-translationally, phosphorylated on serine and threonine residues. Aldosterone and insulin increase the basal level of phosphorylation. In terms of processing, N-glycosylated. N-glycosylation is required for interaction with BPIFA1. As to expression, detected in placenta, lung and kidney. Expressed in kidney (at protein level).

The protein resides in the apical cell membrane. The protein localises to the cytoplasmic vesicle membrane. The catalysed reaction is Na(+)(in) = Na(+)(out). Its activity is regulated as follows. Originally identified and characterized by its inhibition by the diuretic drug amiloride. In terms of biological role, this is one of the three pore-forming subunits of the heterotrimeric epithelial sodium channel (ENaC), a critical regulator of sodium balance and fluid homeostasis. ENaC operates in epithelial tissues, where it mediates the electrodiffusion of sodium ions from extracellular fluid through the apical membrane of cells, with water following osmotically. It plays a key role in maintaining sodium homeostasis through electrogenic sodium reabsorption in the kidneys. Additionally, ENaC is essential for airway surface liquid homeostasis, which is crucial for proper mucus clearance. The polypeptide is Epithelial sodium channel subunit beta (Homo sapiens (Human)).